The chain runs to 49 residues: Large ribosomal subunit protein bL33A (49 aa).

This sequence belongs to the bacterial ribosomal protein bL33 family.

This Latilactobacillus sakei subsp. sakei (strain 23K) (Lactobacillus sakei subsp. sakei) protein is Large ribosomal subunit protein bL33A.